Here is a 350-residue protein sequence, read N- to C-terminus: Guanine nucleotide-binding protein G(t) subunit alpha-1 (350 aa).

Residues 1-21 are disordered; that stretch reads MGAGASAEEKHSRELEKKLKE. Residue glycine 2 is the site of N-myristoyl glycine attachment. A compositionally biased stretch (basic and acidic residues) spans 7-21; that stretch reads AEEKHSRELEKKLKE. In terms of domain architecture, G-alpha spans 28–350; that stretch reads RTVKLLLLGA…KENLKDCGLF (323 aa). Positions 31-44 are G1 motif; the sequence is KLLLLGAGESGKST. 36-43 contacts GTP; sequence GAGESGKS. Serine 43 serves as a coordination point for Mg(2+). Tyrosine 142 is subject to Phosphotyrosine; by SRC. GTP contacts are provided by residues aspartate 146, 171–177, glycine 199, 265–268, and alanine 322; these read LRSRVKT and NKKD. Residues 169-177 are G2 motif; that stretch reads DVLRSRVKT. Position 174 is an ADP-ribosylarginine; by cholera toxin (arginine 174). Threonine 177 contacts Mg(2+). Residues 192 to 201 are G3 motif; the sequence is FRMFDVGGQR. The segment at 261-268 is G4 motif; the sequence is VLFLNKKD. The tract at residues 320–325 is G5 motif; sequence TCATDT. The interval 340-350 is interaction with RHO; sequence IKENLKDCGLF. Cysteine 347 bears the ADP-ribosylcysteine; by pertussis toxin mark.

Belongs to the G-alpha family. G(i/o/t/z) subfamily. As to quaternary structure, heterotrimeric G proteins are composed of 3 subunits alpha, beta and gamma. The alpha chain contains the guanine nucleotide binding site. Interacts with RHO. Interacts with RGS9 and PDE6G. Interacts (when myristoylated) with UNC119; interaction is required for localization in sensory neurons. In terms of tissue distribution, rod photoreceptor cells. Predominantly expressed in the retina followed by the ciliary body, iris and retinal pigment epithelium.

The protein localises to the cell projection. It is found in the cilium. It localises to the photoreceptor outer segment. Its subcellular location is the membrane. The protein resides in the photoreceptor inner segment. In terms of biological role, functions as a signal transducer for the rod photoreceptor RHO. Required for normal RHO-mediated light perception by the retina. Guanine nucleotide-binding proteins (G proteins) function as transducers downstream of G protein-coupled receptors (GPCRs), such as the photoreceptor RHO. The alpha chain contains the guanine nucleotide binding site and alternates between an active, GTP-bound state and an inactive, GDP-bound state. Activated RHO promotes GDP release and GTP binding. Signaling is mediated via downstream effector proteins, such as cGMP-phosphodiesterase. This Homo sapiens (Human) protein is Guanine nucleotide-binding protein G(t) subunit alpha-1 (GNAT1).